The following is a 494-amino-acid chain: NADPH:adrenodoxin oxidoreductase, mitochondrial (494 aa).

The transit peptide at 1-34 directs the protein to the mitochondrion; the sequence is MAPRCWHWWRWSAWSGLRPSPSRSTPTPGFCQKF. 4 residues coordinate FAD: Ala51, Glu72, Leu80, and Val116. NADP(+) is bound by residues 187–190, 231–232, and Glu243; these read QGNV and RR. Phosphoserine is present on Ser313. FAD-binding positions include Trp401 and 408-410; that span reads GVI. Residue Gly408 coordinates NADP(+).

The protein belongs to the ferredoxin--NADP reductase type 1 family. In terms of assembly, monomer. Interacts directly with FDX1. It depends on FAD as a cofactor. As to expression, expressed in the adrenal, testis and ovary and to a lesser extent in the liver and kidney.

Its subcellular location is the mitochondrion inner membrane. It catalyses the reaction 2 reduced [adrenodoxin] + NADP(+) + H(+) = 2 oxidized [adrenodoxin] + NADPH. The enzyme catalyses 2 reduced [2Fe-2S]-[ferredoxin] + NADP(+) + H(+) = 2 oxidized [2Fe-2S]-[ferredoxin] + NADPH. Its pathway is steroid metabolism; cholesterol metabolism. Serves as the first electron transfer protein in all the mitochondrial P450 systems including cholesterol side chain cleavage in all steroidogenic tissues, steroid 11-beta hydroxylation in the adrenal cortex, 25-OH-vitamin D3-24 hydroxylation in the kidney, and sterol C-27 hydroxylation in the liver. Also acts as a ferredoxin--NADP(+) reductase essential for coenzyme Q biosynthesis: together with FDX2, transfers the electrons required for the hydroxylation reaction performed by COQ6. The sequence is that of NADPH:adrenodoxin oxidoreductase, mitochondrial (Fdxr) from Mus musculus (Mouse).